We begin with the raw amino-acid sequence, 226 residues long: tRNA (guanine-N(7)-)-methyltransferase (226 aa).

Residues glutamate 57, glutamate 82, aspartate 109, and aspartate 132 each contribute to the S-adenosyl-L-methionine site. Aspartate 132 is an active-site residue. Substrate contacts are provided by residues lysine 136, aspartate 168, and 205–208 (TKFE).

This sequence belongs to the class I-like SAM-binding methyltransferase superfamily. TrmB family.

The catalysed reaction is guanosine(46) in tRNA + S-adenosyl-L-methionine = N(7)-methylguanosine(46) in tRNA + S-adenosyl-L-homocysteine. It participates in tRNA modification; N(7)-methylguanine-tRNA biosynthesis. Catalyzes the formation of N(7)-methylguanine at position 46 (m7G46) in tRNA. This is tRNA (guanine-N(7)-)-methyltransferase from Legionella pneumophila subsp. pneumophila (strain Philadelphia 1 / ATCC 33152 / DSM 7513).